The sequence spans 146 residues: DNA protection during starvation protein 2 (146 aa).

Fe cation is bound by residues His27, Asp54, and Glu58.

The protein belongs to the Dps family. As to quaternary structure, the 12 subunits form a hollow sphere into which the mineral iron core of up to 500 Fe(3+) can be deposited. Homododecamer.

It localises to the cytoplasm. The enzyme catalyses 2 Fe(2+) + H2O2 + 2 H(+) = 2 Fe(3+) + 2 H2O. Protects DNA from oxidative damage by sequestering intracellular Fe(2+) ion and storing it in the form of Fe(3+) oxyhydroxide mineral. One hydrogen peroxide oxidizes two Fe(2+) ions, which prevents hydroxyl radical production by the Fenton reaction. It is capable of binding and sequestering Fe(2+) ion. Does not bind DNA. This Bacillus anthracis protein is DNA protection during starvation protein 2 (dps2).